Consider the following 304-residue polypeptide: MDKLKAYKALTKVIPQDLVLLDEPMKNHTSFKIGGPADIMVIPETIDQLKSAIKLSKENQMPYFIIGNGSNLIVRDKGMRCIVIKIAEQFSKVSFQGNTVIAEAGILLSKLSKKIMAESLKGFEFASGIPGTLGGAITMNAGAYGGEMKDVVKGAHLLNDNGEVRYFTLEELELGYRTSIIQKQGYIALDVELALEKGDYQEILEITRDLTERRTTKQPLHLPSAGSVFKRPEGYFAGKLIQDSGLKGQRVGGAQVSELHSGFIVNVGDATAKDVLDLIQLIKDRVYETFHVQLETEVRIVGEE.

The 181-residue stretch at 33–213 (IGGPADIMVI…LEITRDLTER (181 aa)) folds into the FAD-binding PCMH-type domain. R177 is an active-site residue. S227 serves as the catalytic Proton donor. E297 is a catalytic residue.

This sequence belongs to the MurB family. The cofactor is FAD.

The protein localises to the cytoplasm. The catalysed reaction is UDP-N-acetyl-alpha-D-muramate + NADP(+) = UDP-N-acetyl-3-O-(1-carboxyvinyl)-alpha-D-glucosamine + NADPH + H(+). Its pathway is cell wall biogenesis; peptidoglycan biosynthesis. Cell wall formation. In Alkaliphilus oremlandii (strain OhILAs) (Clostridium oremlandii (strain OhILAs)), this protein is UDP-N-acetylenolpyruvoylglucosamine reductase.